A 254-amino-acid chain; its full sequence is 3-deoxy-manno-octulosonate cytidylyltransferase (254 aa).

The protein belongs to the KdsB family.

Its subcellular location is the cytoplasm. The enzyme catalyses 3-deoxy-alpha-D-manno-oct-2-ulosonate + CTP = CMP-3-deoxy-beta-D-manno-octulosonate + diphosphate. It functions in the pathway nucleotide-sugar biosynthesis; CMP-3-deoxy-D-manno-octulosonate biosynthesis; CMP-3-deoxy-D-manno-octulosonate from 3-deoxy-D-manno-octulosonate and CTP: step 1/1. The protein operates within bacterial outer membrane biogenesis; lipopolysaccharide biosynthesis. Activates KDO (a required 8-carbon sugar) for incorporation into bacterial lipopolysaccharide in Gram-negative bacteria. The protein is 3-deoxy-manno-octulosonate cytidylyltransferase of Pseudomonas aeruginosa (strain UCBPP-PA14).